Here is a 312-residue protein sequence, read N- to C-terminus: Ribosomal protein L11 methyltransferase (312 aa).

4 residues coordinate S-adenosyl-L-methionine: T159, G180, D201, and N244.

Belongs to the methyltransferase superfamily. PrmA family.

The protein resides in the cytoplasm. It catalyses the reaction L-lysyl-[protein] + 3 S-adenosyl-L-methionine = N(6),N(6),N(6)-trimethyl-L-lysyl-[protein] + 3 S-adenosyl-L-homocysteine + 3 H(+). Methylates ribosomal protein L11. The sequence is that of Ribosomal protein L11 methyltransferase from Desulfitobacterium hafniense (strain DSM 10664 / DCB-2).